Reading from the N-terminus, the 1850-residue chain is MRGIILALVLTLVGSQKFDIDPGFNSRRSYLYNYEGSMLNGLQDRSLGKAGVRLSSKLEISGLPENAYLLKVRSPQVEEYNGVWPRDPFTRSSKITQVISSCFTRLFKFEYSSGRIGNIYAPEDCPDLCVNIVRGILNMFQMTIKKSQNVYELQEAGIGGICHARYVIQEDRKNSRIYVTRTVDLNNCQEKVQKSIGMAYIYPCPVDVMKERLTKGTTAFSYKLKQSDSGTLITDVSSRQVYQISPFNEPTGVAVMEARQQLTLVEVRSERGSAPDVPMQNYGSLRYRFPAVLPQMPLQLIKTKNPEQRIVETLQHIVLNNQQDFHDDVSYRFLEVVQLCRIANADNLESIWRQVSDKPRYRRWLLSAVSASGTTETLKFLKNRIRNDDLNYIQTLLTVSLTLHLLQADEHTLPIAADLMTSSRIQKNPVLQQVACLGYSSVVNRYCSQTSACPKEALQPIHDLADEAISRGREDKMKLALKCIGNMGEPASLKRILKFLPISSSSAADIPVHIQIDAITALKKIAWKDPKTVQGYLIQILADQSLPPEVRMMACAVIFETRPALALITTIANVAMKESNMQVASFVYSHMKSLSKSRLPFMYNISSACNIALKLLSPKLDSMSYRYSKVIRADTYFDNYRVGATGEIFVVNSPRTMFPSAIISKLMANSAGSVADLVEVGIRVEGLADVIMKRNIPFAEYPTYKQIKELGKALQGWKELPTETPLVSAYLKILGQEVAFININKELLQQVMKTVVEPADRNAAIKRIANQIRNSIAGQWTQPVWMGELRYVVPSCLGLPLEYGSYTTALARAAVSVEGKMTPPLTGDFRLSQLLESTMQIRSDLKPSLYVHTVATMGVNTEYFQHAVEIQGEVQTRMPMKFDAKIDVKLKNLKIETNPCREETEIVVGRHKAFAVSRNIGELGVEKRTSILPEDAPLDVTEEPFQTSERASREHFAMQGPDSMPRKQSHSSREDLRRSTGKRAHKRDICLKMHHIGCQLCFSRRSRDASFIQNTYLHKLIGEHEAKIVLMPVHTDADIDKIQLEIQAGSRAAARIITEVNPESEEEDESSPYEDIQAKLKRILGIDSMFKVANKTRHPKNRPSKKGNTVLAEFGTEPDAKTSSSSSSASSTATSSSSSSASSPNRKKPMDEEENDQVKQARNKDASSSSRSSKSSNSSKRSSSKSSNSSKRSSSSSSSSSSSSRSSSSSSSSSSNSKSSSSSSKSSSSSSRSRSSSKSSSSSSSSSSSSSSKSSSSRSSSSSSKSSSHHSHSHHSGHLNGSSSSSSSSRSVSHHSHEHHSGHLEDDSSSSSSSSVLSKIWGRHEIYQYRFRSAHRQEFPKRKLPGDRATSRYSSTRSSHDTSRAASWPKFLGDIKTPVLAAFLHGISNNKKTGGLQLVVYADTDSVRPRVQVFVTNLTDSSKWKLCADASVRNAHKAVAYVKWGWDCRDYKVSTELVTGRFAGHPAAQVKLEWPKVPSNVRSVVEWFYEFVPGAAFMLGFSERMDKNPSRQARMVVALTSPRTCDVVVKLPDIILYQKAVRLPLSLPVGPRIPASELQPPIWNVFAEAPSAVLENLKARCSVSYNKIKTFNEVKFNYSMPANCYHILVQDCSSELKFLVMMKSAGEATNLKAINIKIGSHEIDMHPVNGQVKLLVDGAESPTANISLISAGASLWIHNENQGFALAAPGHGIDKLYFDGKTITIQVPLWMAGKTCGICGKYDAECEQEYRMPNGYLAKNAVSFGHSWILEEAPCRGACKLHRSFVKLEKTVQLAGVDSKCYSTEPVLRCAKGCSATKTTPVTVGFHCLPADSANSLTDKQMKYDQKSEDMQDTVDAHTTCSCENEECST.

The N-terminal stretch at 1–15 is a signal peptide; sequence MRGIILALVLTLVGS. One can recognise a Vitellogenin domain in the interval 24–662; that stretch reads FNSRRSYLYN…SPRTMFPSAI (639 aa). N-linked (GlcNAc...) asparagine glycosylation is present at asparagine 604. The interval 935-984 is disordered; that stretch reads DAPLDVTEEPFQTSERASREHFAMQGPDSMPRKQSHSSREDLRRSTGKRA. Residue asparagine 1094 is glycosylated (N-linked (GlcNAc...) asparagine). 2 disordered regions span residues 1115–1313 and 1338–1362; these read GTEP…SSSS and EFPKRKLPGDRATSRYSSTRSSHDT. The span at 1122–1143 shows a compositional bias: low complexity; sequence TSSSSSSASSTATSSSSSSASS. A compositionally biased stretch (basic and acidic residues) spans 1156-1165; the sequence is DQVKQARNKD. Over residues 1167-1266 the composition is skewed to low complexity; it reads SSSSRSSKSS…SRSSSSSSKS (100 aa). N-linked (GlcNAc...) asparagine glycosylation is found at asparagine 1177 and asparagine 1188. The span at 1267–1277 shows a compositional bias: basic residues; it reads SSHHSHSHHSG. A compositionally biased stretch (low complexity) spans 1278-1291; that stretch reads HLNGSSSSSSSSRS. N-linked (GlcNAc...) asparagine glycosylation occurs at asparagine 1280. Positions 1338–1350 are enriched in basic and acidic residues; the sequence is EFPKRKLPGDRAT. N-linked (GlcNAc...) asparagine glycosylation is found at asparagine 1417, asparagine 1597, and asparagine 1665. One can recognise a VWFD domain in the interval 1579 to 1756; the sequence is ARCSVSYNKI…SWILEEAPCR (178 aa). Intrachain disulfides connect cysteine 1581-cysteine 1719 and cysteine 1604-cysteine 1755.

Phosvitin, an egg yolk storage protein, is one of the most highly phosphorylated (10%) proteins in nature. In terms of processing, cathepsin D is responsible for intraoocytic processing of vitellogenin. Post-translationally, may contain intrachain disulfide bonds. In terms of tissue distribution, after incorporation from serum via a specific receptor, it is cleaved into four fragments, heavy and light chain lipovitellins, phosphovitin and YGP40, and YGP40 is released into the yolk plasma before or during compartmentation of lipovitellin-phosvitin complex into the yolk granule.

Precursor of the major egg-yolk proteins that are sources of nutrients during early development of oviparous organisms. Its function is as follows. Phosvitin is believed to be of importance in sequestering calcium, iron and other cations for the developing embryo. This chain is Vitellogenin-2 (VTG2), found in Gallus gallus (Chicken).